The sequence spans 145 residues: uncharacterized protein (145 aa).

Belongs to the asfivirus K145R family.

It is found in the virion. This is an uncharacterized protein from Ornithodoros (relapsing fever ticks).